The sequence spans 358 residues: Mesaconyl-CoA hydratase (358 aa).

Belongs to the enoyl-CoA hydratase/isomerase family. As to quaternary structure, homodimer.

The catalysed reaction is (2R,3S)-beta-methylmalyl-CoA = 2-methylfumaryl-CoA + H2O. Shows highest activity at 0.5 M KCl. Does not require divalent ions for activity. Functionally, involved in the methylaspartate cycle. Catalyzes the reversible hydration of mesaconyl-CoA (2-methylfumaryl-CoA) to yield beta-methylmalyl-CoA ((2R,3S)-beta-methylmalyl-CoA). Also shows activity with mesaconyl-C4-CoA (3-methylfumaryl-CoA), (S)-citramalyl-CoA and (S)-malyl-CoA. This chain is Mesaconyl-CoA hydratase, found in Haloarcula hispanica (strain ATCC 33960 / DSM 4426 / JCM 8911 / NBRC 102182 / NCIMB 2187 / VKM B-1755).